An 82-amino-acid chain; its full sequence is MSYEKVLQAGKIVIGTKQTIRALKEGKAAEVIVAEDADLPIIEKVMAAANEANVPITKVDSMKKLGKACKIQVGAAAVAILR.

The protein belongs to the eukaryotic ribosomal protein eL8 family.

In Geobacillus thermodenitrificans (strain NG80-2), this protein is RNA-binding protein GTNG_0100.